The sequence spans 515 residues: Arabinose import ATP-binding protein AraG 2 (515 aa).

Positions 1–22 (MTMQTMTAASGHDAEAGTPPDG) are disordered. 2 ABC transporter domains span residues 25 to 260 (LALD…MVGR) and 260 to 511 (RSIE…LIKL). 57–64 (GENGAGKS) contacts ATP.

It belongs to the ABC transporter superfamily. Arabinose importer (TC 3.A.1.2.2) family. The complex is composed of two ATP-binding proteins (AraG), two transmembrane proteins (AraH) and a solute-binding protein (AraF).

Its subcellular location is the cell inner membrane. The enzyme catalyses L-arabinose(out) + ATP + H2O = L-arabinose(in) + ADP + phosphate + H(+). Functionally, part of the ABC transporter complex AraFGH involved in arabinose import. Responsible for energy coupling to the transport system. In Burkholderia cenocepacia (strain HI2424), this protein is Arabinose import ATP-binding protein AraG 2.